A 251-amino-acid polypeptide reads, in one-letter code: MRRPLVAGNWKMHGTHSSVAELIKGLRQLALPSGVDVAVMPPCLFISQVIQGLAGKAIDVGAQNSAVEPMQGALTGETAPSQLADVGCSMVLVGHSERRLILGESDEVVSRKFAAAQSCGLVPVLCVGETRAEREAGKTLEVVARQLGSVIDELGVGAFARAVVAYEPVWAIGTGLTASPAQAQEVHAAIRAQLAAENAEVAKGVRLLYGGSVKAASAAELFGMPDIDGGLVGGASLNADEFGAICRAAGS.

9-11 (NWK) lines the substrate pocket. Histidine 95 (electrophile) is an active-site residue. Glutamate 167 functions as the Proton acceptor in the catalytic mechanism. Residues glycine 173, serine 212, and 233–234 (GG) each bind substrate.

Belongs to the triosephosphate isomerase family. In terms of assembly, homodimer.

It localises to the cytoplasm. The catalysed reaction is D-glyceraldehyde 3-phosphate = dihydroxyacetone phosphate. It functions in the pathway carbohydrate biosynthesis; gluconeogenesis. It participates in carbohydrate degradation; glycolysis; D-glyceraldehyde 3-phosphate from glycerone phosphate: step 1/1. Its function is as follows. Involved in the gluconeogenesis. Catalyzes stereospecifically the conversion of dihydroxyacetone phosphate (DHAP) to D-glyceraldehyde-3-phosphate (G3P). The protein is Triosephosphate isomerase of Pseudomonas aeruginosa (strain LESB58).